Consider the following 110-residue polypeptide: Cell division protein FtsB (110 aa).

Over 1-3 the chain is Cytoplasmic; the sequence is MRL. The helical transmembrane segment at 4-21 threads the bilayer; it reads IILCLAALVLLIQFPLWL. Over 22–110 the chain is Periplasmic; it reads GKGGWLRVWD…PPKIEPKEKR (89 aa). A coiled-coil region spans residues 31 to 64; that stretch reads DLDQQVIAAQKKNDELRARNAKLNSEVQDLKEGT.

Belongs to the FtsB family. Part of a complex composed of FtsB, FtsL and FtsQ.

It is found in the cell inner membrane. Functionally, essential cell division protein. May link together the upstream cell division proteins, which are predominantly cytoplasmic, with the downstream cell division proteins, which are predominantly periplasmic. The polypeptide is Cell division protein FtsB (Herminiimonas arsenicoxydans).